Here is a 1738-residue protein sequence, read N- to C-terminus: Gag-Pol polyprotein (1738 aa).

Glycine 2 carries N-myristoyl glycine; by host lipidation. A PTAP/PSAP motif motif is present at residues 111-114; that stretch reads PSAP. The segment covering 111–124 has biased composition (pro residues); sequence PSAPSLPPEPPLST. The disordered stretch occupies residues 111 to 218; the sequence is PSAPSLPPEP…STTSQAFPLR (108 aa). Positions 130–134 match the LYPX(n)L motif motif; that stretch reads LYPAL. The span at 161 to 173 shows a compositional bias: pro residues; the sequence is DPPPYRDPGPPSP. Residues 162-165 carry the PPXY motif motif; that stretch reads PPPY. Serine 192 bears the Phosphoserine; by host mark. Positions 345-393 are interaction with host PIAS4; the sequence is GRSPTNLAKVKGITQGPNESPSAFLERLKEAYRRYTPYDPEDPGQETNV. Positions 430 to 435 are interaction with host UBE2I; sequence IFNKRE. Composition is skewed to basic and acidic residues over residues 434–466 and 486–499; these read RETPEEREERVRRETEEKEERRRAEDERREKER and RQDRQGGERRRPQL. Disordered regions lie at residues 434–499 and 513–552; these read RETP…RPQL and WARDCPKKPRGPRGPRPQASLLTLDDQGGQGQEPPPEPRI. A coiled-coil region spans residues 438–478; the sequence is EEREERVRRETEEKEERRRAEDERREKERDRRRHREMSKLL. The segment at 502-519 adopts a CCHC-type zinc-finger fold; sequence DQCAYCKEKGHWARDCPK. One can recognise a Peptidase A2 domain in the interval 561–631; sequence VTFLVDTGAQ…CPYPLLGRDL (71 aa). Aspartate 566 (protease; shared with dimeric partner) is an active-site residue. The region spanning 741-932 is the Reverse transcriptase domain; it reads LDQGILVPCQ…KQVKYLGYLL (192 aa). The Mg(2+) site is built by aspartate 809, aspartate 883, aspartate 884, aspartate 1183, glutamate 1221, aspartate 1242, and aspartate 1312. Positions 1174 to 1320 constitute an RNase H type-1 domain; that stretch reads PDADHTWYTD…ADQAAREVAT (147 aa). Residues 1387–1427 form an HHCC-type zinc finger; sequence HQLTHLSFSKTKALLERSYSPYYMLNRDRTLKDITETCKAC. Residues 1444–1602 enclose the Integrase catalytic domain; it reads RGHRPGTHWE…TPYEILYGAP (159 aa). Aspartate 1455 and aspartate 1514 together coordinate Mg(2+).

This sequence belongs to the retroviral Pol polyprotein family. Homohexamer; further associates as homomultimer. The virus core is composed of a lattice formed from hexagonal rings, each containing six capsid monomers. Interacts with mouse UBE2I and mouse PIAS4. As to quaternary structure, interacts (via PPXY motif) with host NEDD4. Interacts (via PSAP motif) with host TSG101. Interacts (via LYPX(n)L motif) with host PDCD6IP. In terms of assembly, the reverse transcriptase is a monomer (Potential). Interacts (via RNase domains) with host release factor ETF1; this interaction is essential for translational readthrough of amber codon between viral gag and pol genes, as well as for viral replication. Homodimer. Requires Mg(2+) as cofactor. In terms of processing, ubiquitinated by ITCH. Gag can recruit the ubiquitin ligase Itch in an L domain-independent manner to facilitate virus release via a mechanism that involves Gag ubiquitination. Specific enzymatic cleavages by the viral protease yield mature proteins. The protease is released by autocatalytic cleavage. The polyprotein is cleaved during and after budding, this process is termed maturation. Post-translationally, sumoylated; which is required for virus replication. In terms of processing, phosphorylated on serine residues.

It is found in the virion. The protein localises to the host cell membrane. Its subcellular location is the host late endosome membrane. The protein resides in the host endosome. It localises to the host multivesicular body. It is found in the host cytoplasm. The catalysed reaction is DNA(n) + a 2'-deoxyribonucleoside 5'-triphosphate = DNA(n+1) + diphosphate. The enzyme catalyses Endonucleolytic cleavage to 5'-phosphomonoester.. Its activity is regulated as follows. Most efficiently inhibited by Amprenavir, which is able to block Gag-Pol processing in infected cells. Functionally, plays a role in budding and is processed by the viral protease during virion maturation outside the cell. During budding, it recruits, in a PPXY-dependent or independent manner, Nedd4-like ubiquitin ligases that conjugate ubiquitin molecules to Gag-Pol, or to Gag-Pol binding host factors. Interaction with HECT ubiquitin ligases probably links the viral protein to the host ESCRT pathway and facilitates release. Targets Gag and gag-pol polyproteins to the plasma membrane via a multipartite membrane binding signal, that includes its myristoylated N-terminus. Also mediates nuclear localization of the pre-integration complex. In terms of biological role, constituent of the pre-integration complex (PIC) which tethers the latter to mitotic chromosomes. This allows the integration of the viral genome into the host DNA. Its function is as follows. Forms the spherical core of the virion that encapsulates the genomic RNA-nucleocapsid complex. Functionally, involved in the packaging and encapsidation of two copies of the genome. Binds with high affinity to conserved UCUG elements within the packaging signal, located near the 5'-end of the genome. This binding is dependent on genome dimerization. Acts as a nucleic acid chaperone which is involved in rearrangement of nucleic acid secondary structures during gRNA retrotranscription. The aspartyl protease mediates proteolytic cleavages of Gag and Gag-Pol polyproteins during or shortly after the release of the virion from the plasma membrane. Cleavages take place as an ordered, step-wise cascade to yield mature proteins. This process is called maturation. Displays maximal activity during the budding process just prior to particle release from the cell (Potential). Cleaves the translation initiation factor eIF4G leading to the inhibition of host cap-dependent translation. In terms of biological role, RT is a multifunctional enzyme that converts the viral dimeric RNA genome into dsDNA in the cytoplasm, shortly after virus entry into the cell. This enzyme displays a DNA polymerase activity that can copy either DNA or RNA templates, and a ribonuclease H (RNase H) activity that cleaves the RNA strand of RNA-DNA heteroduplexes in a partially processive 3' to 5' endonucleasic mode. Conversion of viral genomic RNA into dsDNA requires many steps. A tRNA binds to the primer-binding site (PBS) situated at the 5' end of the viral RNA. RT uses the 3' end of the tRNA primer to perform a short round of RNA-dependent minus-strand DNA synthesis. The reading proceeds through the U5 region and ends after the repeated (R) region which is present at both ends of viral RNA. The portion of the RNA-DNA heteroduplex is digested by the RNase H, resulting in a ssDNA product attached to the tRNA primer. This ssDNA/tRNA hybridizes with the identical R region situated at the 3' end of viral RNA. This template exchange, known as minus-strand DNA strong stop transfer, can be either intra- or intermolecular. RT uses the 3' end of this newly synthesized short ssDNA to perform the RNA-dependent minus-strand DNA synthesis of the whole template. RNase H digests the RNA template except for a polypurine tract (PPT) situated at the 5' end of the genome. It is not clear if both polymerase and RNase H activities are simultaneous. RNase H probably can proceed both in a polymerase-dependent (RNA cut into small fragments by the same RT performing DNA synthesis) and a polymerase-independent mode (cleavage of remaining RNA fragments by free RTs). Secondly, RT performs DNA-directed plus-strand DNA synthesis using the PPT that has not been removed by RNase H as primers. PPT and tRNA primers are then removed by RNase H. The 3' and 5' ssDNA PBS regions hybridize to form a circular dsDNA intermediate. Strand displacement synthesis by RT to the PBS and PPT ends produces a blunt ended, linear dsDNA copy of the viral genome that includes long terminal repeats (LTRs) at both ends. Its function is as follows. Catalyzes viral DNA integration into the host chromosome, by performing a series of DNA cutting and joining reactions. This enzyme activity takes place after virion entry into a cell and reverse transcription of the RNA genome in dsDNA. The first step in the integration process is 3' processing. This step requires a complex comprising the viral genome, matrix protein and integrase. This complex is called the pre-integration complex (PIC). The integrase protein removes 2 nucleotides from each 3' end of the viral DNA, leaving recessed CA OH's at the 3' ends. In the second step that requires cell division, the PIC enters cell nucleus. In the third step, termed strand transfer, the integrase protein joins the previously processed 3' ends to the 5' ends of strands of target cellular DNA at the site of integration. The last step is viral DNA integration into host chromosome. This is Gag-Pol polyprotein (pol) from Friend murine leukemia virus (isolate PVC-211) (FrMLV).